A 439-amino-acid chain; its full sequence is Ribosomal protein uS12 methylthiotransferase RimO (439 aa).

The 111-residue stretch at Gly-6–Pro-116 folds into the MTTase N-terminal domain. 6 residues coordinate [4Fe-4S] cluster: Cys-15, Cys-51, Cys-80, Cys-148, Cys-152, and Cys-155. A Radical SAM core domain is found at Leu-134–Ser-371. The region spanning Gln-374–Val-439 is the TRAM domain.

Belongs to the methylthiotransferase family. RimO subfamily. Requires [4Fe-4S] cluster as cofactor.

It localises to the cytoplasm. It catalyses the reaction L-aspartate(89)-[ribosomal protein uS12]-hydrogen + (sulfur carrier)-SH + AH2 + 2 S-adenosyl-L-methionine = 3-methylsulfanyl-L-aspartate(89)-[ribosomal protein uS12]-hydrogen + (sulfur carrier)-H + 5'-deoxyadenosine + L-methionine + A + S-adenosyl-L-homocysteine + 2 H(+). In terms of biological role, catalyzes the methylthiolation of an aspartic acid residue of ribosomal protein uS12. This chain is Ribosomal protein uS12 methylthiotransferase RimO, found in Hahella chejuensis (strain KCTC 2396).